The chain runs to 159 residues: uncharacterized protein (159 aa).

Residues 4–24 (QIALILSLIILIFFIYKFAMF) traverse the membrane as a helical segment.

The protein resides in the membrane. This is an uncharacterized protein from Acheta domesticus (House cricket).